The primary structure comprises 124 residues: Group 1 truncated hemoglobin GlbN (124 aa).

The heme site is built by histidine 46, histidine 70, and histidine 117.

This sequence belongs to the truncated hemoglobin family. Group I subfamily. Monomer. Heme serves as cofactor.

Its function is as follows. Forms a very stable complex with oxygen. The oxygen dissociation rate is 0.011 sec(-1). The sequence is that of Group 1 truncated hemoglobin GlbN (glbN) from Synechocystis sp. (strain ATCC 27184 / PCC 6803 / Kazusa).